A 352-amino-acid polypeptide reads, in one-letter code: Glycerol-1-phosphate dehydrogenase [NAD(P)+] (352 aa).

NAD(+)-binding positions include 99-103 (GAKID) and 121-124 (TAPS). D126 contributes to the substrate binding site. S130 serves as a coordination point for NAD(+). D173 is a substrate binding site. Zn(2+) contacts are provided by D173 and H253. Residue H257 participates in substrate binding. H269 serves as a coordination point for Zn(2+).

It belongs to the glycerol-1-phosphate dehydrogenase family. Requires Zn(2+) as cofactor.

It is found in the cytoplasm. The enzyme catalyses sn-glycerol 1-phosphate + NAD(+) = dihydroxyacetone phosphate + NADH + H(+). The catalysed reaction is sn-glycerol 1-phosphate + NADP(+) = dihydroxyacetone phosphate + NADPH + H(+). It participates in membrane lipid metabolism; glycerophospholipid metabolism. Catalyzes the NAD(P)H-dependent reduction of dihydroxyacetonephosphate (DHAP or glycerone phosphate) to glycerol 1-phosphate (G1P). The G1P thus generated is used as the glycerophosphate backbone of phospholipids in the cellular membranes of Archaea. This chain is Glycerol-1-phosphate dehydrogenase [NAD(P)+], found in Thermoplasma acidophilum (strain ATCC 25905 / DSM 1728 / JCM 9062 / NBRC 15155 / AMRC-C165).